A 268-amino-acid chain; its full sequence is Undecaprenyl-diphosphatase 1 (268 aa).

The next 7 helical transmembrane spans lie at 5-25, 43-63, 84-104, 107-127, 184-204, 218-238, and 247-267; these read SIIS…IPVS, GNTF…LVYF, LAVL…HDFI, VLFE…FILL, AAEF…VLDL, LIAV…RSLL, and APFA…LLVI.

Belongs to the UppP family.

The protein localises to the cell inner membrane. It carries out the reaction di-trans,octa-cis-undecaprenyl diphosphate + H2O = di-trans,octa-cis-undecaprenyl phosphate + phosphate + H(+). In terms of biological role, catalyzes the dephosphorylation of undecaprenyl diphosphate (UPP). Confers resistance to bacitracin. In Agrobacterium fabrum (strain C58 / ATCC 33970) (Agrobacterium tumefaciens (strain C58)), this protein is Undecaprenyl-diphosphatase 1.